The sequence spans 784 residues: Receptor-like protein 38 (784 aa).

The first 30 residues, 1 to 30, serve as a signal peptide directing secretion; it reads MIRSQSYCFLGITITIYFFFCLLPLPNTFA. Residues 31–752 are Extracellular-facing; it reads SPPTQSLCRH…SELEEPVLNW (722 aa). 5 LRR repeats span residues 109-133, 134-157, 158-180, 182-204, and 205-227; these read LQHL…IENL, SHLT…IGNL, NQLE…SFAN, TKLS…LSNL, and TSLA…DLSG. Asn-132 carries N-linked (GlcNAc...) asparagine glycosylation. 3 N-linked (GlcNAc...) asparagine glycosylation sites follow: Asn-180, Asn-193, and Asn-203. Residues 228–251 form an LRR 6; degenerate repeat; it reads LHNLEQIFGNENSFVGLFPASLLK. LRR repeat units lie at residues 252 to 276, 278 to 301, 302 to 324, 326 to 349, 351 to 373, 374 to 400, 402 to 422, 423 to 446, 447 to 470, and 472 to 496; these read ISSL…NTSS, SRLT…LSKL, VNLE…SISK, VNLT…IWKP, NLQS…EVVN, GAKL…NFRF, FFLD…LKNS, TDFN…CMDS, TMLR…LMNC, and DMEF…SRKS. Asn-273 is a glycosylation site (N-linked (GlcNAc...) asparagine). Asn-327 is a glycosylation site (N-linked (GlcNAc...) asparagine). N-linked (GlcNAc...) asparagine glycosylation is found at Asn-421 and Asn-432. The LRR 17; degenerate repeat unit spans residues 497 to 518; the sequence is LMVLVLRSNAFYGPVYNSTTYL. 3 N-linked (GlcNAc...) asparagine glycosylation sites follow: Asn-513, Asn-544, and Asn-562. Residues 520-544 form an LRR 18 repeat; that stretch reads FPRLSIIDISNNDFVGSLPQDYFAN. LRR repeat units follow at residues 608 to 632, 633 to 656, 657 to 680, and 682 to 705; these read FRGF…IGLL, SELL…LANI, TNLE…LGNL, and FLSN…QFGT. Asn-639, Asn-655, Asn-668, Asn-679, Asn-687, and Asn-707 each carry an N-linked (GlcNAc...) asparagine glycan. Residues 753-773 traverse the membrane as a helical segment; it reads IAAAIAFGPGVFCGFVIGHIF. Over 774 to 784 the chain is Cytoplasmic; that stretch reads TSYKHLWFIAR.

It belongs to the RLP family.

Its subcellular location is the cell membrane. The sequence is that of Receptor-like protein 38 from Arabidopsis thaliana (Mouse-ear cress).